The primary structure comprises 97 residues: DNA-directed RNA polymerase subunit omega (97 aa).

Belongs to the RNA polymerase subunit omega family. As to quaternary structure, the RNAP catalytic core consists of 2 alpha, 1 beta, 1 beta' and 1 omega subunit. When a sigma factor is associated with the core the holoenzyme is formed, which can initiate transcription.

It carries out the reaction RNA(n) + a ribonucleoside 5'-triphosphate = RNA(n+1) + diphosphate. In terms of biological role, promotes RNA polymerase assembly. Latches the N- and C-terminal regions of the beta' subunit thereby facilitating its interaction with the beta and alpha subunits. In Coxiella burnetii (strain Dugway 5J108-111), this protein is DNA-directed RNA polymerase subunit omega.